The following is a 235-amino-acid chain: Ribonuclease 3 (235 aa).

Residues 6-131 (IDQLKKLTGH…LIAVIYLDGG (126 aa)) enclose the RNase III domain. Glutamate 44 serves as a coordination point for Mg(2+). Aspartate 48 is an active-site residue. Mg(2+) contacts are provided by aspartate 117 and glutamate 120. The active site involves glutamate 120. One can recognise a DRBM domain in the interval 156–225 (DAKTELQEWA…AEKILRREGM (70 aa)).

It belongs to the ribonuclease III family. Homodimer. Mg(2+) serves as cofactor.

Its subcellular location is the cytoplasm. It catalyses the reaction Endonucleolytic cleavage to 5'-phosphomonoester.. Its function is as follows. Digests double-stranded RNA. Involved in the processing of primary rRNA transcript to yield the immediate precursors to the large and small rRNAs (23S and 16S). Processes some mRNAs, and tRNAs when they are encoded in the rRNA operon. Processes pre-crRNA and tracrRNA of type II CRISPR loci if present in the organism. The polypeptide is Ribonuclease 3 (Bartonella bacilliformis (strain ATCC 35685 / KC583 / Herrer 020/F12,63)).